Consider the following 739-residue polypeptide: Pre-mRNA-splicing factor ATP-dependent RNA helicase ddx-15 (739 aa).

Residues 1–19 are compositionally biased toward basic and acidic residues; it reads MSSRHRLDLDGSGRGDRRR. Positions 1 to 49 are disordered; sequence MSSRHRLDLDGSGRGDRRRSPNRRSRSRSRSPHRRSSPDRKRQIGAVGN. Basic residues predominate over residues 20-35; that stretch reads SPNRRSRSRSRSPHRR. Residues 86–257 form the Helicase ATP-binding domain; sequence MELLRNNQCI…FEDCPLLSVP (172 aa). 99-106 contributes to the ATP binding site; that stretch reads GETGSGKT. A DEAH box motif is present at residues 204-207; that stretch reads DEAH. The Helicase C-terminal domain maps to 282-462; it reads TVIQIHMVEE…SVVLQLKKLG (181 aa).

This sequence belongs to the DEAD box helicase family. DEAH subfamily. DDX15/PRP43 sub-subfamily.

The protein localises to the nucleus. It catalyses the reaction ATP + H2O = ADP + phosphate + H(+). Its function is as follows. Pre-mRNA processing factor involved in disassembly of spliceosomes after the release of mature mRNA. This is Pre-mRNA-splicing factor ATP-dependent RNA helicase ddx-15 from Caenorhabditis elegans.